A 76-amino-acid chain; its full sequence is Probable insulin-like peptide alpha-type 3 (76 aa).

Residues 1 to 18 (MFVLLIILSIILAQVTDA) form the signal peptide. Cystine bridges form between Cys28–Cys58, Cys40–Cys71, and Cys46–Cys72.

The protein belongs to the insulin family.

The protein localises to the secreted. In Caenorhabditis elegans, this protein is Probable insulin-like peptide alpha-type 3 (ins-23).